The sequence spans 833 residues: DNA ligase (833 aa).

Residues Asp35 to Asp39, Ser84 to Leu85, and Glu115 each bind NAD(+). Lys117 (N6-AMP-lysine intermediate) is an active-site residue. 4 residues coordinate NAD(+): Arg138, Glu175, Lys292, and Lys316. 4 residues coordinate Zn(2+): Cys410, Cys413, Cys428, and Cys434. The BRCT domain maps to Leu750–Pro833.

It belongs to the NAD-dependent DNA ligase family. LigA subfamily. It depends on Mg(2+) as a cofactor. The cofactor is Mn(2+).

The catalysed reaction is NAD(+) + (deoxyribonucleotide)n-3'-hydroxyl + 5'-phospho-(deoxyribonucleotide)m = (deoxyribonucleotide)n+m + AMP + beta-nicotinamide D-nucleotide.. Its function is as follows. DNA ligase that catalyzes the formation of phosphodiester linkages between 5'-phosphoryl and 3'-hydroxyl groups in double-stranded DNA using NAD as a coenzyme and as the energy source for the reaction. It is essential for DNA replication and repair of damaged DNA. This chain is DNA ligase, found in Xanthomonas euvesicatoria pv. vesicatoria (strain 85-10) (Xanthomonas campestris pv. vesicatoria).